Reading from the N-terminus, the 670-residue chain is Receptor for retinol uptake STRA6 (670 aa).

The Extracellular portion of the chain corresponds to 1 to 50; that stretch reads MESQASENGSQTSSGVTDDYSSWYIEEPLGAEEVQPEGVIPLCQLTAPPA. Asparagine 8 is a glycosylation site (N-linked (GlcNAc...) asparagine). Residues 51–71 form a helical membrane-spanning segment; that stretch reads LLHACLASLSFLVLLLLALLV. At 72 to 97 the chain is on the cytoplasmic side; it reads RRRRLWPRCGHRGLGLPSPVDFLAGD. A helical transmembrane segment spans residues 98 to 118; that stretch reads LSWTVPAAVFVVLFSNLCLLL. The Extracellular segment spans residues 119–144; that stretch reads PDENPLPFLNLTAASSPDGEMETSRG. N-linked (GlcNAc...) asparagine glycosylation occurs at asparagine 128. A helical membrane pass occupies residues 145–165; that stretch reads PWKLLALLYYPALYYPLAACA. At 166 to 168 the chain is on the cytoplasmic side; the sequence is SAG. A helical transmembrane segment spans residues 169–189; sequence HQAAFLLGTVLSWAHFGVQVW. Over 190-205 the chain is Extracellular; that stretch reads QKAECPQDPKIYKHYS. Residues 206 to 226 form a helical membrane-spanning segment; sequence LLASLPLLLGLGFLSLWYPVQ. Topologically, residues 227 to 296 are cytoplasmic; sequence LVQSLRHRTG…PQPGFRLPLK (70 aa). The segment at 235 to 294 is interaction with RBP1; it reads TGAGSQGLQTSYSEKYLRTLLCPKKLDSCSHPASKRSLLSRAWAFSHHSIYTPQPGFRLP. A helical membrane pass occupies residues 297–317; that stretch reads LVISATLTGTATYQVALLLLV. Residues 318–368 lie on the Extracellular side of the membrane; sequence SVVPTVQKVRAGINTDVSYLLAGFGIVLSEDRQEVVELVKHHLWTVEACYI. A helical membrane pass occupies residues 369-389; the sequence is SALVLSCASTFLLLIRSLRTH. Residues 390–423 are Cytoplasmic-facing; the sequence is RANLQALHRGAALDLDPPLQSIHPSRQAIVSWMS. The chain crosses the membrane as a helical span at residues 424 to 444; that stretch reads FCAYQTAFSCLGLLVQQVIFF. Residues 445 to 474 lie on the Extracellular side of the membrane; sequence LGTTSLAFLVFVPLLHGRNLLLLRSLESTW. Residues 475–495 traverse the membrane as a helical segment; that stretch reads PFWLTVALAVILQNIAANWIF. At 496–510 the chain is on the cytoplasmic side; sequence LRTHHGYPELTNRRM. The helical intramembrane region spans 511–548; it reads LCVATFLLFPINMLVGAIMAVWRVLISSLYNTVHLGQM. Over 549–670 the chain is Cytoplasmic; that stretch reads DLSLLPQRAA…TSAKANGTQP (122 aa). Residue tyrosine 644 is modified to Phosphotyrosine.

Homodimer. Interacts with JAK2 and STAT5. Interacts (via extracellular domains) with RBP4. Interacts (via cytoplasmic domains) with RBP1. Post-translationally, phosphorylated on tyrosine residues in response to RBP4 binding. Phosphorylation requires the presence of LRAT, suggesting it may be triggered by the uptake of retinol that is then metabolized within the cell to retinoids that function as signaling molecules. In terms of tissue distribution, widely expressed in the embryo. Detected in adult in the retinal pigment epithelium in the eye. In the adult, is highly expressed in cells that compose blood-organ barriers in the brain (choroid plexus and the brain microvascular), in testis (the basal layer of the seminiferous epithelium), in the yolk sac, and in the chorioallantoic placenta. Detected in white adipose tissue and skeletal muscle, but not in liver (at protein level). Widely expressed in adult, with high expression levels in the eye. Detected in brain, cerebellum, testis, pituitary, pancreas, kidney, spleen, and female genital tract; and at very low levels in heart and lung. Not detected in liver.

The protein resides in the cell membrane. In terms of biological role, functions as a retinol transporter. Accepts all-trans retinol from the extracellular retinol-binding protein RBP4, facilitates retinol transport across the cell membrane, and then transfers retinol to the cytoplasmic retinol-binding protein RBP1. Retinol uptake is enhanced by LRAT, an enzyme that converts retinol to all-trans retinyl esters, the storage forms of vitamin A. Contributes to the activation of a signaling cascade that depends on retinol transport and LRAT-dependent generation of retinol metabolites that then trigger activation of JAK2 and its target STAT5, and ultimately increase the expression of SOCS3 and inhibit cellular responses to insulin. Important for the homeostasis of vitamin A and its derivatives, such as retinoic acid and 11-cis-retinal. STRA6-mediated transport is particularly important in the eye, and under conditions of dietary vitamin A deficiency. Does not transport retinoic acid. The chain is Receptor for retinol uptake STRA6 (Stra6) from Mus musculus (Mouse).